Consider the following 275-residue polypeptide: MAQKPVADALTLELEPVVEANMTRHLDTEDIWFAHDYVPFDQGENFAFLGGRDWDPSQSTLPRTITDACEILLILKDNLAGHHRELVEHFILEDWWGRWLGRWTAEEHLHAIALREYLVVTREVDPVANEDVRVQHVMKGYRAEKYTQVETLVYMAFYERCGAVFCRNLAAQIEEPILAGLIDRIARDEVRHEEFFANLVTHCLDYTRDETIAAIAARAADLDVLGADIEAYRDKLQNVADAGIFGKPQLRQLISDRITAWGLAGEPSLKQFVTG.

Glu107, His110, Glu159, Glu189, and His192 together coordinate Fe cation.

It belongs to the fatty acid desaturase type 2 family. In terms of assembly, homodimer. Requires Fe(2+) as cofactor.

It participates in lipid metabolism; fatty acid metabolism. May be a desaturase involved in mycobacterial fatty acid biosynthesis. The polypeptide is Putative acyl-[acyl-carrier-protein] desaturase DesA2 (desA2) (Mycobacterium tuberculosis (strain CDC 1551 / Oshkosh)).